Here is an 83-residue protein sequence, read N- to C-terminus: Pigment-dispersing hormone peptides (83 aa).

An N-terminal signal peptide occupies residues 1–24; sequence MRFIILGVLFIAVASMILSNGVMA. Alanine amide is present on alanine 80.

It belongs to the arthropod PDH family. Strongly expressed in eyestalk tissue and cerebral ganglia (at protein level).

The protein resides in the secreted. The pigment-dispersing hormone causes the migration of the distal retinal pigment into the proximal end of the pigment chromatophore cells and thus decreases the amount of light entering the retinulas. May also function as a neurotransmitter and/or neuromodulator. This Eurydice pulchra (Speckled sea louse) protein is Pigment-dispersing hormone peptides.